A 350-amino-acid polypeptide reads, in one-letter code: ATPase GET3 (350 aa).

26 to 33 (KGGVGKTT) contacts ATP. Residue aspartate 57 is part of the active site. Glutamate 241 and asparagine 268 together coordinate ATP. Zn(2+) contacts are provided by cysteine 281 and cysteine 284.

This sequence belongs to the arsA ATPase family. In terms of assembly, homodimer. Component of the Golgi to ER traffic (GET) complex, which is composed of GET1, GET2 and GET3. Within the complex, GET1 and GET2 form a heterotetramer which is stabilized by phosphatidylinositol binding and which binds to the GET3 homodimer. Interacts with the chloride channel protein GEF1.

The protein localises to the cytoplasm. It localises to the endoplasmic reticulum. It is found in the golgi apparatus. ATPase required for the post-translational delivery of tail-anchored (TA) proteins to the endoplasmic reticulum. Recognizes and selectively binds the transmembrane domain of TA proteins in the cytosol. This complex then targets to the endoplasmic reticulum by membrane-bound receptors GET1 and GET2, where the tail-anchored protein is released for insertion. This process is regulated by ATP binding and hydrolysis. ATP binding drives the homodimer towards the closed dimer state, facilitating recognition of newly synthesized TA membrane proteins. ATP hydrolysis is required for insertion. Subsequently, the homodimer reverts towards the open dimer state, lowering its affinity for the GET1-GET2 receptor, and returning it to the cytosol to initiate a new round of targeting. Cooperates with the HDEL receptor ERD2 to mediate the ATP-dependent retrieval of resident ER proteins that contain a C-terminal H-D-E-L retention signal from the Golgi to the ER. Involved in low-level resistance to the oxyanions arsenite and arsenate, and in heat tolerance. The chain is ATPase GET3 from Candida glabrata (strain ATCC 2001 / BCRC 20586 / JCM 3761 / NBRC 0622 / NRRL Y-65 / CBS 138) (Yeast).